A 750-amino-acid chain; its full sequence is Olfactomedin-like protein 2B (750 aa).

The N-terminal stretch at 1-22 (MAKPRLLVLYFALIVVPAWVSS) is a signal peptide. Coiled-coil stretches lie at residues 40–68 (AEDE…KVKA) and 179–213 (KLEE…GKEN). Asn-187 and Asn-213 each carry an N-linked (GlcNAc...) asparagine glycan. Disordered regions lie at residues 346–437 (TRRP…PPAV) and 452–484 (VPPT…PEEE). Polar residues-rich tracts occupy residues 354-384 (QGHS…SDPS) and 393-413 (PTLQ…LQPS). The segment covering 416–430 (VPATTVAHTATQQPA) has biased composition (low complexity). Residues 493–750 (RCKDTLSTIT…QVTYHVIFAY (258 aa)) enclose the Olfactomedin-like domain. A disulfide bond links Cys-494 and Cys-680. Asn-695 carries an N-linked (GlcNAc...) asparagine glycan.

In terms of assembly, homodimer. Binds to heparin and chondroitin sulfate E. Post-translationally, O-glycosylated and N-glycosylated.

It localises to the secreted. This chain is Olfactomedin-like protein 2B (OLFML2B), found in Homo sapiens (Human).